A 1325-amino-acid chain; its full sequence is Lysine-specific demethylase 3A (1325 aa).

Disordered stretches follow at residues 249 to 284, 300 to 333, and 372 to 399; these read SKRI…QGHV, PANK…RRSV, and QNGK…TGLK. A compositionally biased stretch (polar residues) spans 274 to 283; the sequence is SPEVSQSQGH. The segment covering 378-390 has biased composition (low complexity); sequence SLISSRSSSLSDS. The C6-type zinc-finger motif lies at 669-694; that stretch reads CDVCDTTIFNLRWVCSKCGFGVCVDC. Disordered regions lie at residues 772–791 and 798–819; these read TLKE…SLQQ and PQLP…TASV. Residues 888-892 carry the LXXLL motif motif; it reads LRNLL. Positions 1062 to 1285 constitute a JmjC domain; it reads MPSRFDDLMK…HCFWLTQEFR (224 aa). 3 residues coordinate Fe cation: His1124, Asp1126, and His1253.

This sequence belongs to the JHDM2 histone demethylase family. Requires Fe(2+) as cofactor.

It localises to the cytoplasm. Its subcellular location is the nucleus. It catalyses the reaction N(6),N(6)-dimethyl-L-lysyl(9)-[histone H3] + 2 2-oxoglutarate + 2 O2 = L-lysyl(9)-[histone H3] + 2 formaldehyde + 2 succinate + 2 CO2. Histone demethylase that specifically demethylates 'Lys-9' of histone H3, thereby playing a central role in histone code. Preferentially demethylates mono- and dimethylated H3 'Lys-9' residue, with a preference for dimethylated residue, while it has weak or no activity on trimethylated H3 'Lys-9'. Demethylation of Lys residue generates formaldehyde and succinate. This chain is Lysine-specific demethylase 3A (KDM3A), found in Gallus gallus (Chicken).